The sequence spans 307 residues: Taste receptor type 2 member 41 (307 aa).

The Extracellular portion of the chain corresponds to 1 to 7; it reads MQAALMA. The helical transmembrane segment at 8–28 threads the bilayer; sequence FFMLLFSLLSLLGIAANGFIV. Over 29–40 the chain is Cytoplasmic; that stretch reads LVLGREWLRYGR. The chain crosses the membrane as a helical span at residues 41-61; it reads LLPLDMILISLGASRXCLQLV. Over 62 to 88 the chain is Extracellular; it reads GTVHNFYYSARKVEYSGGLGRQFFHLH. Residues 89 to 109 traverse the membrane as a helical segment; the sequence is WHFLNSATFWFCSWLSVLFCV. Over 110–129 the chain is Cytoplasmic; the sequence is KIANITHPTFLWLKWRFPGW. Residues 130–150 traverse the membrane as a helical segment; it reads VPWLLLGSVLISFIITLLFFW. Residues 151-183 lie on the Extracellular side of the membrane; sequence VNYPVYQELLIRKFSGNMTYKWNTRIETYYFPS. N-linked (GlcNAc...) asparagine glycosylation occurs at asparagine 167. Residues 184–204 traverse the membrane as a helical segment; sequence LKLVIWSIPFSVFLVSIMLLI. Residues 205-234 are Cytoplasmic-facing; the sequence is NSLRRHTQRMQHNGHSLQDPSTQAHTRALK. The helical transmembrane segment at 235–255 threads the bilayer; sequence SLISFLFLYALSFLSLIIDAT. Over 256 to 264 the chain is Extracellular; that stretch reads KFISMQNDF. Residues 265-285 traverse the membrane as a helical segment; the sequence is YWPWQIAVYLCISVHPFILIF. Over 286 to 307 the chain is Cytoplasmic; that stretch reads SNLKLRSMFWQVLLLARGFWVA.

This sequence belongs to the G-protein coupled receptor T2R family.

It localises to the membrane. Its function is as follows. Receptor that may play a role in the perception of bitterness and is gustducin-linked. May play a role in sensing the chemical composition of the gastrointestinal content. The activity of this receptor may stimulate alpha gustducin, mediate PLC-beta-2 activation and lead to the gating of TRPM5. This is Taste receptor type 2 member 41 (TAS2R41) from Gorilla gorilla gorilla (Western lowland gorilla).